A 225-amino-acid chain; its full sequence is Dehydrin DHN4 (225 aa).

A disordered region spans residues 1–78; sequence MEYQGQQHGR…EDDGMGGRRK (78 aa). The span at 21–39 shows a compositional bias: gly residues; the sequence is HGVGTGMGTHGGVGTGAAA. Tandem repeats lie at residues 105 to 118, 119 to 136, 137 to 159, 160 to 178, and 179 to 199. The segment at 105-199 is 5 X approximate tandem repeats; the sequence is YGQQGTGMAG…GTGMHGTGGT (95 aa).

The protein belongs to the plant dehydrin family.

This chain is Dehydrin DHN4 (DHN4), found in Hordeum vulgare (Barley).